Reading from the N-terminus, the 350-residue chain is Biotin synthase (350 aa).

In terms of domain architecture, Radical SAM core spans N38–E256. 3 residues coordinate [4Fe-4S] cluster: C53, C57, and C60. [2Fe-2S] cluster is bound by residues C97, C128, C188, and R260.

The protein belongs to the radical SAM superfamily. Biotin synthase family. In terms of assembly, homodimer. [4Fe-4S] cluster serves as cofactor. It depends on [2Fe-2S] cluster as a cofactor.

It carries out the reaction (4R,5S)-dethiobiotin + (sulfur carrier)-SH + 2 reduced [2Fe-2S]-[ferredoxin] + 2 S-adenosyl-L-methionine = (sulfur carrier)-H + biotin + 2 5'-deoxyadenosine + 2 L-methionine + 2 oxidized [2Fe-2S]-[ferredoxin]. It functions in the pathway cofactor biosynthesis; biotin biosynthesis; biotin from 7,8-diaminononanoate: step 2/2. Catalyzes the conversion of dethiobiotin (DTB) to biotin by the insertion of a sulfur atom into dethiobiotin via a radical-based mechanism. The protein is Biotin synthase of Aliivibrio fischeri (strain MJ11) (Vibrio fischeri).